A 255-amino-acid chain; its full sequence is Small ribosomal subunit protein eS1B (255 aa).

The residue at position 2 (alanine 2) is an N-acetylalanine; partial. The residue at position 245 (serine 245) is a Phosphoserine. Lysine 248 participates in a covalent cross-link: Glycyl lysine isopeptide (Lys-Gly) (interchain with G-Cter in ubiquitin). Threonine 254 is modified (phosphothreonine).

The protein belongs to the eukaryotic ribosomal protein eS1 family. As to quaternary structure, component of the small ribosomal subunit. Mature ribosomes consist of a small (40S) and a large (60S) subunit. The 40S subunit contains about 33 different proteins and 1 molecule of RNA (18S). The 60S subunit contains about 49 different proteins and 3 molecules of RNA (25S, 5.8S and 5S).

The protein localises to the cytoplasm. In Saccharomyces cerevisiae (strain JAY291) (Baker's yeast), this protein is Small ribosomal subunit protein eS1B.